A 128-amino-acid polypeptide reads, in one-letter code: Dehydrin Xero 1 (128 aa).

Residues 1-19 (MESYQNQSGAQQTHQQLDQ) are compositionally biased toward polar residues. Residues 1-128 (MESYQNQSGA…IKEKLPGGHH (128 aa)) are disordered. Composition is skewed to low complexity over residues 23-41 (PFPA…PAVA) and 48-60 (GMLH…SSSS). Basic and acidic residues predominate over residues 75-91 (GITEKIKEKLPGHHDSN). A compositionally biased stretch (polar residues) spans 92-104 (KTSSLGSTTTAYD). Basic and acidic residues predominate over residues 107 to 128 (TVHHEKKGMMEKIKEKLPGGHH).

Belongs to the plant dehydrin family.

The protein is Dehydrin Xero 1 (XERO1) of Arabidopsis thaliana (Mouse-ear cress).